The primary structure comprises 346 residues: UDP-N-acetylenolpyruvoylglucosamine reductase (346 aa).

Residues 22–194 (GFDVRARFAC…TSVTFRLPKV (173 aa)) enclose the FAD-binding PCMH-type domain. Residue Arg-170 is part of the active site. The active-site Proton donor is Ser-246. Glu-342 is an active-site residue.

Belongs to the MurB family. It depends on FAD as a cofactor.

Its subcellular location is the cytoplasm. The enzyme catalyses UDP-N-acetyl-alpha-D-muramate + NADP(+) = UDP-N-acetyl-3-O-(1-carboxyvinyl)-alpha-D-glucosamine + NADPH + H(+). It participates in cell wall biogenesis; peptidoglycan biosynthesis. Cell wall formation. This is UDP-N-acetylenolpyruvoylglucosamine reductase from Paraburkholderia xenovorans (strain LB400).